Here is a 101-residue protein sequence, read N- to C-terminus: Putative RNA-binding protein RbpA (101 aa).

Residues 2 to 79 form the RRM domain; it reads SIYVGNLSYD…RDLKVNKAKP (78 aa). Residues 73–83 show a composition bias toward basic and acidic residues; it reads KVNKAKPRENR. The tract at residues 73–101 is disordered; the sequence is KVNKAKPRENRSGGGSFGGGRKSYGGSRY. Over residues 84–101 the composition is skewed to gly residues; sequence SGGGSFGGGRKSYGGSRY.

This Synechocystis sp. (strain ATCC 27184 / PCC 6803 / Kazusa) protein is Putative RNA-binding protein RbpA (rbpA).